The following is a 292-amino-acid chain: MKTELEEEEEEEWRSVHEVLLIVLPYLHSLFELLSMIRVSRSLRDAIRDETALWTKLVIEPPLSSRLTDDILSEFSSKSAGKLKTLILRQCLMVTNKGLRRVVDANPLITKIIVPGCSGLTPEGIMECVESLSKNNHKLETLHINGVNGFTKQHLSALYTYLSSEGTIDLEVCPKCDEVRMIPSCSRESCNQKQRKCRGCWLCIPRCAECAVCLVGSDTESQEAACGNDDVLCLECWLVLPKCRFCNKPYCTNHSSRRHEIAITDAASRPSFECEACYYRAGTNPYEVDYQI.

The region spanning 21-79 (LIVLPYLHSLFELLSMIRVSRSLRDAIRDETALWTKLVIEPPLSSRLTDDILSEFSSKS) is the F-box; degenerate domain.

As to quaternary structure, part of a SCF (ASK-cullin-F-box) protein ligase complex. Interacts with SKP1A/ASK1 and CUL1.

The protein operates within protein modification; protein ubiquitination. Component of SCF(ASK-cullin-F-box) E3 ubiquitin ligase complexes, which may mediate the ubiquitination and subsequent proteasomal degradation of target proteins. Required during the endosperm development in embryos. This chain is F-box protein SKIP28 (SKIP28), found in Arabidopsis thaliana (Mouse-ear cress).